We begin with the raw amino-acid sequence, 166 residues long: Large ribosomal subunit protein bL19 (166 aa).

It belongs to the bacterial ribosomal protein bL19 family. Part of the 50S ribosomal subunit. Forms a cluster with proteins L3 and L14.

This protein is located at the 30S-50S ribosomal subunit interface and may play a role in the structure and function of the aminoacyl-tRNA binding site. Binds the 23S rRNA. The polypeptide is Large ribosomal subunit protein bL19 (rplS) (Deinococcus radiodurans (strain ATCC 13939 / DSM 20539 / JCM 16871 / CCUG 27074 / LMG 4051 / NBRC 15346 / NCIMB 9279 / VKM B-1422 / R1)).